Consider the following 459-residue polypeptide: UDP-N-acetylmuramate--L-alanine ligase (459 aa).

Residue 118–124 (GTHGKTT) coordinates ATP.

It belongs to the MurCDEF family.

The protein localises to the cytoplasm. The catalysed reaction is UDP-N-acetyl-alpha-D-muramate + L-alanine + ATP = UDP-N-acetyl-alpha-D-muramoyl-L-alanine + ADP + phosphate + H(+). It functions in the pathway cell wall biogenesis; peptidoglycan biosynthesis. Its function is as follows. Cell wall formation. The protein is UDP-N-acetylmuramate--L-alanine ligase of Clostridium beijerinckii (strain ATCC 51743 / NCIMB 8052) (Clostridium acetobutylicum).